Here is a 439-residue protein sequence, read N- to C-terminus: Xylose isomerase (439 aa).

Active-site residues include H100 and D103. Residues E231, E267, H270, D295, D306, D308, and D338 each coordinate Mg(2+).

Belongs to the xylose isomerase family. Homotetramer. Requires Mg(2+) as cofactor.

It localises to the cytoplasm. It catalyses the reaction alpha-D-xylose = alpha-D-xylulofuranose. This is Xylose isomerase from Rhodopirellula baltica (strain DSM 10527 / NCIMB 13988 / SH1).